The sequence spans 494 residues: Glutamyl-tRNA(Gln) amidotransferase subunit A (494 aa).

Residues Lys-81 and Ser-156 each act as charge relay system in the active site. The active-site Acyl-ester intermediate is the Ser-180.

It belongs to the amidase family. GatA subfamily. In terms of assembly, heterotrimer of A, B and C subunits.

It carries out the reaction L-glutamyl-tRNA(Gln) + L-glutamine + ATP + H2O = L-glutaminyl-tRNA(Gln) + L-glutamate + ADP + phosphate + H(+). In terms of biological role, allows the formation of correctly charged Gln-tRNA(Gln) through the transamidation of misacylated Glu-tRNA(Gln) in organisms which lack glutaminyl-tRNA synthetase. The reaction takes place in the presence of glutamine and ATP through an activated gamma-phospho-Glu-tRNA(Gln). This Mycobacterium tuberculosis (strain ATCC 25177 / H37Ra) protein is Glutamyl-tRNA(Gln) amidotransferase subunit A.